The chain runs to 438 residues: Battenin (438 aa).

The segment at 1–29 (MGGCAGSRRRLLDSEEEETAPEPRPPRSY) is disordered. Topologically, residues 1–37 (MGGCAGSRRRLLDSEEEETAPEPRPPRSYHKGALWKN) are cytoplasmic. Ser-14 carries the post-translational modification Phosphoserine. A helical transmembrane segment spans residues 38-58 (VMGFWLLGLCNNFSYVVMLSA). At 59–127 (AHDILSHQRA…GLHLLPYSPR (69 aa)) the chain is on the lumenal side. Residues 68 to 89 (ASGNQSHVDPDPPPTAHNSSSR) form a disordered region. 2 N-linked (GlcNAc...) asparagine glycosylation sites follow: Asn-71 and Asn-85. The helical transmembrane segment at 128–148 (VLVSGICAAGSFILVAFSHSV) threads the bilayer. Over 149–151 (GTS) the chain is Cytoplasmic. Residues 152–172 (LCGVVLASISSGVGEVTFLSL) form a helical membrane-spanning segment. Topologically, residues 173–182 (TAFYPRAVIS) are lumenal. A helical membrane pass occupies residues 183 to 203 (WWSSGTGGAGLMGALSYLGLT). Topologically, residues 204 to 277 (QAGLSPQHTL…NLSLQERWTV (74 aa)) are cytoplasmic. Positions 236–267 (PQDPGGEEEAETSARQPLIDSETPESKPDSSS) are disordered. Positions 242–244 (EEE) match the Lysosomal targeting motif motif. A Lysosomal targeting motif. Required for AP1G1, AP2A2 and AP3D1 interaction motif is present at residues 253–254 (LI). The chain crosses the membrane as a helical span at residues 278–298 (FKGLLWYIVPLVLVYFAEYFI). Over 299 to 346 (NQGLFELLFFRNTSLNHAQQYRWYQMLYQAGVFVSRSSLHCCRIRFTW) the chain is Lumenal. A glycan (N-linked (GlcNAc...) asparagine) is linked at Asn-310. The chain crosses the membrane as a helical span at residues 347–367 (VLALLQCLNLAFLLVDVWFSF). Over 368–438 (LPSIYLVFLI…PLHDFLCHLS (71 aa)) the chain is Cytoplasmic. Positions 409–419 (MAAACISDTLG) match the Lysosomal targeting motif motif. The residue at position 435 (Cys-435) is a Cysteine methyl ester. Cys-435 carries S-farnesyl cysteine lipidation. Positions 436–438 (HLS) are cleaved as a propeptide — removed in mature form.

It belongs to the battenin family. Interacts with DCTN1, KIF3A, RAB7A and RILP. Interacts with CLN5. In terms of processing, highly glycosylated. Farnesylation is important for trafficking to lysosomes.

It localises to the lysosome membrane. Its subcellular location is the late endosome. It is found in the lysosome. Its function is as follows. Mediates microtubule-dependent, anterograde transport connecting the Golgi network, endosomes, autophagosomes, lysosomes and plasma membrane, and participates in several cellular processes such as regulation of lysosomal pH, lysosome protein degradation, receptor-mediated endocytosis, autophagy, transport of proteins and lipids from the TGN, apoptosis and synaptic transmission. Facilitates the proteins transport from trans-Golgi network (TGN)-to other membrane compartments such as transport of microdomain-associated proteins to the plasma membrane, IGF2R transport to the lysosome where it regulates the CTSD release leading to regulation of CTSD maturation and thereby APP intracellular processing. Moreover regulates CTSD activity in response to osmotic stress. Also binds galactosylceramide and transports it from the trans Golgi to the rafts, which may have immediate and downstream effects on cell survival by modulating ceramide synthesis. At the plasma membrane, regulates actin-dependent events including filopodia formation, cell migration, and pinocytosis through ARF1-CDC42 pathway and also the cytoskeleton organization through interaction with MYH10 and fodrin leading to the regulation of the plasma membrane association of Na+, K+ ATPase complex. Regulates synaptic transmission in the amygdala, hippocampus, and cerebellum through regulation of synaptic vesicles density and their proximity to active zones leading to modulation of short-term plasticity and age-dependent anxious behavior, learning and memory. Regulates autophagic vacuoles (AVs) maturation by modulating the trafficking between endocytic and autophagolysosomal/lysosomal compartments, which involves vesicle fusion leading to regulation of degradation process. Also participates in cellular homeostasis of compounds such as, water, ions, amino acids, proteins and lipids in several tissue namely in brain and kidney through regulation of their transport and synthesis. The protein is Battenin of Canis lupus familiaris (Dog).